Consider the following 267-residue polypeptide: Deoxyribose-phosphate aldolase (267 aa).

Asp123 functions as the Proton donor/acceptor in the catalytic mechanism. Lys185 (schiff-base intermediate with acetaldehyde) is an active-site residue. Catalysis depends on Lys217, which acts as the Proton donor/acceptor.

The protein belongs to the DeoC/FbaB aldolase family. DeoC type 1 subfamily.

Its subcellular location is the cytoplasm. The enzyme catalyses 2-deoxy-D-ribose 5-phosphate = D-glyceraldehyde 3-phosphate + acetaldehyde. Its pathway is carbohydrate degradation; 2-deoxy-D-ribose 1-phosphate degradation; D-glyceraldehyde 3-phosphate and acetaldehyde from 2-deoxy-alpha-D-ribose 1-phosphate: step 2/2. Its function is as follows. Catalyzes a reversible aldol reaction between acetaldehyde and D-glyceraldehyde 3-phosphate to generate 2-deoxy-D-ribose 5-phosphate. The sequence is that of Deoxyribose-phosphate aldolase from Coccidioides immitis (strain RS) (Valley fever fungus).